The following is a 296-amino-acid chain: Carboxylesterase YbfK (296 aa).

Residues Ser-129, Glu-244, and His-273 each act as charge relay system in the active site.

Belongs to the AB hydrolase superfamily.

It is found in the cytoplasm. It catalyses the reaction a carboxylic ester + H2O = an alcohol + a carboxylate + H(+). In terms of biological role, shows carboxylesterase activity in vitro. This chain is Carboxylesterase YbfK (ybfK), found in Bacillus subtilis (strain 168).